We begin with the raw amino-acid sequence, 1716 residues long: DNA-directed RNA polymerase I subunit RPA1 (1716 aa).

The Zn(2+) site is built by Cys64, Cys67, Cys74, His77, Cys104, and Cys107. The interval 110 to 201 is clamp; sequence LTCPRAAIHL…VAHFWKTHMA (92 aa). The Zn(2+) site is built by Cys205 and Cys208. The tract at residues 327-433 is clamp; the sequence is FTNGQTVNLQ…IRQILEKKEG (107 aa). The segment at 410-423 is rudder; that stretch reads DSDMDKLMLEKYPG. DNA contacts are provided by Lys431, Arg436, and Arg443. Residues 475-549 are involved in RRN3 binding to Pol I complex; sequence YPQPVTPWNV…QGAKVVCRHV (75 aa). Residue Arg559 participates in RNA binding. Asp595, Asp597, and Asp599 together coordinate Mg(2+). Asp599 contacts RNA. The funnel stretch occupies residues 812-890; the sequence is KPNADVMRQR…NEINKACMPF (79 aa). A bridging helix region spans residues 967-1008; that stretch reads RPPEFFFHCMAGREGLVDTAVKTSRSGYLQRCIIKHLEGLVI. The segment at 1067 to 1162 is mediates the interaction with TOP2A; sequence ADPQKVLRHF…SLSVWRPDIH (96 aa). Residues 1214 to 1255 are trigger loop; that stretch reads PGEAVGLLAAQSIGEPSTQMTLNTFHFAGRGEMNVTLGIPRL. DNA is bound at residue Arg1256. A disordered region spans residues 1368–1493; it reads ASAFRSVNTR…RHSRPQGAEA (126 aa). The span at 1380–1397 shows a compositional bias: basic and acidic residues; the sequence is TQKDLDDTEDSGRNRREE. Composition is skewed to acidic residues over residues 1398–1419 and 1429–1451; these read ERDEEEEGNIVDAEAEEGDADA and EEEVDYESEEEGEEEEEEDVQEE. The segment covering 1452–1464 has biased composition (basic and acidic residues); that stretch reads ENIKGEGAHQTHE. The segment covering 1465-1477 has biased composition (acidic residues); sequence PDEEEGSGLEEES.

This sequence belongs to the RNA polymerase beta' chain family. In terms of assembly, component of the RNA polymerase I (Pol I) complex consisting of 13 subunits: a ten-subunit catalytic core composed of POLR1A/RPA1, POLR1B/RPA2, POLR1C/RPAC1, POLR1D/RPAC2, POLR1H/RPA12, POLR2E/RPABC1, POLR2F/RPABC2, POLR2H/RPABC3, POLR2K/RPABC4 and POLR2L/RPABC5; a mobile stalk subunit POLR1F/RPA43 protruding from the core and additional subunits homologous to general transcription factors POLR1E/RPA49 and POLR1G/RPA34. Part of Pol I pre-initiation complex (PIC), in which Pol I core assembles with RRN3 and promoter-bound UTBF and SL1/TIF-IB complex. Interacts (via dock II domain) with TOP2A; this interaction may assist Pol I transcription initiation by releasing supercoils occurring during DNA unwinding. Interacts with CAVIN1; this interaction induces the dissociation of Pol I complex paused at rDNA terminator sequences. Interacts with MYO1C. Interacts with ERBB2. Interacts with DDX11. Interacts with RECQL5. Requires Mg(2+) as cofactor. In terms of processing, phosphorylated.

Its subcellular location is the nucleus. The protein localises to the nucleolus. The protein resides in the chromosome. The enzyme catalyses RNA(n) + a ribonucleoside 5'-triphosphate = RNA(n+1) + diphosphate. Its function is as follows. Catalytic core component of RNA polymerase I (Pol I), a DNA-dependent RNA polymerase which synthesizes ribosomal RNA precursors using the four ribonucleoside triphosphates as substrates. Transcribes 47S pre-rRNAs from multicopy rRNA gene clusters, giving rise to 5.8S, 18S and 28S ribosomal RNAs. Pol I-mediated transcription cycle proceeds through transcription initiation, transcription elongation and transcription termination stages. During transcription initiation, Pol I pre-initiation complex (PIC) is recruited by the selectivity factor 1 (SL1/TIF-IB) complex bound to the core promoter that precedes an rDNA repeat unit. The PIC assembly bends the promoter favoring the formation of the transcription bubble and promoter escape. Once the polymerase has escaped from the promoter it enters the elongation phase during which RNA is actively polymerized, based on complementarity with the template DNA strand. Highly processive, assembles in structures referred to as 'Miller trees' where many elongating Pol I complexes queue and transcribe the same rDNA coding regions. At terminator sequences downstream of the rDNA gene, PTRF interacts with Pol I and halts Pol I transcription leading to the release of the RNA transcript and polymerase from the DNA. Forms Pol I active center together with the second largest subunit POLR1B/RPA2. Appends one nucleotide at a time to the 3' end of the nascent RNA, with POLR1A/RPA1 contributing a Mg(2+)-coordinating DxDGD motif, and POLR1B/RPA2 participating in the coordination of a second Mg(2+) ion and providing lysine residues believed to facilitate Watson-Crick base pairing between the incoming nucleotide and the template base. Typically, Mg(2+) ions direct a 5' nucleoside triphosphate to form a phosphodiester bond with the 3' hydroxyl of the preceding nucleotide of the nascent RNA, with the elimination of pyrophosphate. Has proofreading activity: Pauses and backtracks to allow the cleavage of a missincorporated nucleotide via POLR1H/RPA12. High Pol I processivity is associated with decreased transcription fidelity. This chain is DNA-directed RNA polymerase I subunit RPA1, found in Rattus norvegicus (Rat).